Consider the following 1218-residue polypeptide: Coatomer subunit alpha-3 (1218 aa).

WD repeat units lie at residues 7-48 (TKSN…DRFD), 49-88 (EHDG…CLFT), 91-132 (GHLD…AVLT), 133-172 (GHNH…KKTV), 202-241 (GHDR…AWEV), 246-285 (GHMN…GIQT), 288-326 (REHD…PAFS), 363-404 (SLNQ…AGRT), and 450-489 (PLPI…GELQ). The tract at residues 854–893 (AMANGGDGFDAEEGEANEEDGEEGGWDLEDLELPPEAETP) is disordered. The segment covering 862 to 888 (FDAEEGEANEEDGEEGGWDLEDLELPP) has biased composition (acidic residues).

As to quaternary structure, oligomeric complex that consists of at least the alpha, beta, beta', gamma, delta, epsilon and zeta subunits.

It is found in the cytoplasm. The protein localises to the golgi apparatus membrane. It localises to the cytoplasmic vesicle. Its subcellular location is the COPI-coated vesicle membrane. In terms of biological role, the coatomer is a cytosolic protein complex that binds to dilysine motifs and reversibly associates with Golgi non-clathrin-coated vesicles, which further mediate biosynthetic protein transport from the ER, via the Golgi up to the trans Golgi network. Coatomer complex is required for budding from Golgi membranes, and is essential for the retrograde Golgi-to-ER transport of dilysine-tagged proteins. The protein is Coatomer subunit alpha-3 of Oryza sativa subsp. japonica (Rice).